The chain runs to 124 residues: Small ribosomal subunit protein uS13 (124 aa).

Over residues 103–117 (KCNARTRKGPRKTVA) the composition is skewed to basic residues. The segment at 103–124 (KCNARTRKGPRKTVANKKIETK) is disordered.

The protein belongs to the universal ribosomal protein uS13 family. Part of the 30S ribosomal subunit. Forms a loose heterodimer with protein S19. Forms two bridges to the 50S subunit in the 70S ribosome.

In terms of biological role, located at the top of the head of the 30S subunit, it contacts several helices of the 16S rRNA. In the 70S ribosome it contacts the 23S rRNA (bridge B1a) and protein L5 of the 50S subunit (bridge B1b), connecting the 2 subunits; these bridges are implicated in subunit movement. Contacts the tRNAs in the A and P-sites. The sequence is that of Small ribosomal subunit protein uS13 from Malacoplasma penetrans (strain HF-2) (Mycoplasma penetrans).